Consider the following 424-residue polypeptide: Deoxyguanosinetriphosphate triphosphohydrolase-like protein (424 aa).

The segment covering 1-10 (MEGTAPPTPY) has biased composition (pro residues). The disordered stretch occupies residues 1–31 (MEGTAPPTPYDPASVARYAPEPDKRPGRTAF). The segment covering 20-31 (PEPDKRPGRTAF) has biased composition (basic and acidic residues). Residues 70–220 (RLTHSLECAQ…MDWADDVAYS (151 aa)) form the HD domain.

The protein belongs to the dGTPase family. Type 2 subfamily.

The chain is Deoxyguanosinetriphosphate triphosphohydrolase-like protein from Streptomyces coelicolor (strain ATCC BAA-471 / A3(2) / M145).